Consider the following 314-residue polypeptide: L-lactate dehydrogenase 1 (314 aa).

NAD(+) contacts are provided by residues valine 16, aspartate 37, lysine 42, tyrosine 68, and 82 to 83 (GL). Substrate-binding positions include glutamine 85, arginine 91, and 123–126 (NPVD). NAD(+)-binding positions include 121–123 (ATN) and serine 146. 151 to 154 (DSAR) lines the substrate pocket. The beta-D-fructose 1,6-bisphosphate site is built by arginine 156 and histidine 171. Histidine 178 (proton acceptor) is an active-site residue. Tyrosine 223 carries the post-translational modification Phosphotyrosine. Residue threonine 232 participates in substrate binding.

Belongs to the LDH/MDH superfamily. LDH family. Homotetramer.

Its subcellular location is the cytoplasm. It carries out the reaction (S)-lactate + NAD(+) = pyruvate + NADH + H(+). It functions in the pathway fermentation; pyruvate fermentation to lactate; (S)-lactate from pyruvate: step 1/1. Allosterically activated by fructose 1,6-bisphosphate (FBP). Catalyzes the conversion of lactate to pyruvate. The chain is L-lactate dehydrogenase 1 from Bacillus anthracis.